Here is a 1235-residue protein sequence, read N- to C-terminus: ATP-dependent helicase/nuclease subunit A (1235 aa).

Residues 10-482 (SIWTDDQWSA…IDLNQNFRSR (473 aa)) enclose the UvrD-like helicase ATP-binding domain. Position 31-38 (31-38 (AAAGSGKT)) interacts with ATP. Residues 509–799 (QAALKLGASY…RLMTIHSSKG (291 aa)) enclose the UvrD-like helicase C-terminal domain.

This sequence belongs to the helicase family. AddA subfamily. As to quaternary structure, heterodimer of AddA and AddB/RexB. Mg(2+) is required as a cofactor.

The catalysed reaction is Couples ATP hydrolysis with the unwinding of duplex DNA by translocating in the 3'-5' direction.. The enzyme catalyses ATP + H2O = ADP + phosphate + H(+). In terms of biological role, the heterodimer acts as both an ATP-dependent DNA helicase and an ATP-dependent, dual-direction single-stranded exonuclease. Recognizes the chi site generating a DNA molecule suitable for the initiation of homologous recombination. The AddA nuclease domain is required for chi fragment generation; this subunit has the helicase and 3' -&gt; 5' nuclease activities. In Bacillus velezensis (strain DSM 23117 / BGSC 10A6 / LMG 26770 / FZB42) (Bacillus amyloliquefaciens subsp. plantarum), this protein is ATP-dependent helicase/nuclease subunit A.